Consider the following 229-residue polypeptide: MKLVLIRHGQSEWNKLNLFTGWHDVDLSEEGVVEAMTAGKRIKEAGLEFDVAFTSVLTRAIKTLNYVLEESDQMWVPVHKSWRLNERHYGALQGLNKQETAEKYGADQVQKWRRSYDTLPPLLEENDERQAKNDRRYQLLDTHAIPSGENLKVTLERVIPYWMDTIAPEIKAGRRVVIAAHGNSLRALVKFLEGISDDEIMELEIPTGVPLVYELNDDLKPVNKYYLDK.

Substrate-binding positions include R7–N14, T20–G21, R59, E86–Y89, K97, R113–R114, and G182–N183. Residue H8 is the Tele-phosphohistidine intermediate of the active site. The Proton donor/acceptor role is filled by E86.

The protein belongs to the phosphoglycerate mutase family. BPG-dependent PGAM subfamily.

The catalysed reaction is (2R)-2-phosphoglycerate = (2R)-3-phosphoglycerate. It functions in the pathway carbohydrate degradation; glycolysis; pyruvate from D-glyceraldehyde 3-phosphate: step 3/5. Functionally, catalyzes the interconversion of 2-phosphoglycerate and 3-phosphoglycerate. The sequence is that of 2,3-bisphosphoglycerate-dependent phosphoglycerate mutase from Listeria innocua serovar 6a (strain ATCC BAA-680 / CLIP 11262).